Consider the following 544-residue polypeptide: uncharacterized protein (544 aa).

Positions 1–22 are cleaved as a signal peptide; it reads MYFSQNAIILVMLMFVISAVFY.

This is an uncharacterized protein from Methanocaldococcus jannaschii (strain ATCC 43067 / DSM 2661 / JAL-1 / JCM 10045 / NBRC 100440) (Methanococcus jannaschii).